The primary structure comprises 529 residues: Glutamyl-tRNA reductase (529 aa).

47–50 (TCNR) serves as a coordination point for substrate. The Nucleophile role is filled by Cys48. Positions 56-80 (SPRQQAPAPPRPGSAPPPSDEELSR) are disordered. Positions 62 to 73 (PAPPRPGSAPPP) are enriched in pro residues. Residues Ser125, 130–132 (EPQ), and Gln136 contribute to the substrate site. 205 to 210 (GAGDMA) lines the NADP(+) pocket. The interval 454-505 (RGAVDGPPTPRSARGAAPPASGARGGGSPRHADPRPQAAEDNGVYARQPGGR) is disordered. Low complexity predominate over residues 464 to 475 (RSARGAAPPASG).

It belongs to the glutamyl-tRNA reductase family. As to quaternary structure, homodimer.

The enzyme catalyses (S)-4-amino-5-oxopentanoate + tRNA(Glu) + NADP(+) = L-glutamyl-tRNA(Glu) + NADPH + H(+). It participates in porphyrin-containing compound metabolism; protoporphyrin-IX biosynthesis; 5-aminolevulinate from L-glutamyl-tRNA(Glu): step 1/2. Its function is as follows. Catalyzes the NADPH-dependent reduction of glutamyl-tRNA(Glu) to glutamate 1-semialdehyde (GSA). The chain is Glutamyl-tRNA reductase from Sorangium cellulosum (strain So ce56) (Polyangium cellulosum (strain So ce56)).